The sequence spans 325 residues: MHSKVVIIGSGPSGHTAAIYLGRAELKPILYEGMLANGIAPGGQLTTTTDVENYPGFPDGILGPSLMEAFRKQSEKYGAQIITDTVSKLDLSKRPFKYCCESNEEVFHTADVVILATGAYARRLNIPGEEIYWQRGISACAVCDGAAPIFRGKPLAVVGGGDSAAEESLFLTRYATKVYLLVRRDKLRASPIMAKRLLHHPKIEILWNTVALESLGDNNLMNCVKIKNVKTQEVSELQVNGLFYAIGHEPATTLVRGQVECDKDGYIITKNGGPETNIKGFFAAGDVQDKKWRQAVTSAGSGCMAGLAAERLLAEEEEMKNIEDS.

Residues Ser10–Ser13, Ile39–Ala40, Gln44, Asn53, Val86, Cys143, Asp286, and Arg293–Ala295 each bind FAD. Cys140 and Cys143 are oxidised to a cystine.

It belongs to the class-II pyridine nucleotide-disulfide oxidoreductase family. As to quaternary structure, homodimer. It depends on FAD as a cofactor.

It is found in the cytoplasm. The enzyme catalyses [thioredoxin]-dithiol + NADP(+) = [thioredoxin]-disulfide + NADPH + H(+). This Pneumocystis carinii protein is Thioredoxin reductase (TRR1).